The chain runs to 473 residues: Zinc finger and SCAN domain-containing protein 21 (473 aa).

A Glycyl lysine isopeptide (Lys-Gly) (interchain with G-Cter in SUMO2) cross-link involves residue Lys-27. Residues 45 to 127 (RQRFRQFGYH…TLLEDLEREL (83 aa)) form the SCAN box domain. Residues 127–169 (LDEPGHQVSTPPNEQKPVWEKISSSGTAKESPSSMQPQPLETS) are disordered. Over residues 148 to 167 (ISSSGTAKESPSSMQPQPLE) the composition is skewed to polar residues. Glycyl lysine isopeptide (Lys-Gly) (interchain with G-Cter in SUMO2) cross-links involve residues Lys-221 and Lys-232. Residues 244-272 (LENEKGTKPPLQEAGSKKGRESVPTKPTP) form a disordered region. The span at 258–272 (GSKKGRESVPTKPTP) shows a compositional bias: basic and acidic residues. 7 consecutive C2H2-type zinc fingers follow at residues 277-299 (YICAECGKAFSNSSNLTKHRRTH), 305-327 (YVCTKCGKAFSHSSNLTLHYRTH), 333-354 (YDCKCGKAFGQSSDLLKHQRMH), 360-382 (YQCKDCGKAFSGKGSLIRHYRIH), 388-410 (YQCNECGKSFSQHAGLSSHQRLH), 416-438 (YKCKECGKAFNHSSNFNKHHRIH), and 444-466 (YWCHHCGKTFCSKSNLSKHQRVH). A Glycyl lysine isopeptide (Lys-Gly) (interchain with G-Cter in SUMO2) cross-link involves residue Lys-349.

The protein belongs to the krueppel C2H2-type zinc-finger protein family.

The protein localises to the nucleus. Functionally, strong transcriptional activator. Plays an important role in spermatogenesis; essential for the progression of meiotic prophase I in spermatocytes. The polypeptide is Zinc finger and SCAN domain-containing protein 21 (ZSCAN21) (Homo sapiens (Human)).